We begin with the raw amino-acid sequence, 352 residues long: Chorismate synthase (352 aa).

R48 is an NADP(+) binding site. FMN-binding positions include 125–127, 238–239, G278, 293–297, and R319; these read RSS, NA, and KPTSS.

Belongs to the chorismate synthase family. Homotetramer. FMNH2 serves as cofactor.

It carries out the reaction 5-O-(1-carboxyvinyl)-3-phosphoshikimate = chorismate + phosphate. The protein operates within metabolic intermediate biosynthesis; chorismate biosynthesis; chorismate from D-erythrose 4-phosphate and phosphoenolpyruvate: step 7/7. Its function is as follows. Catalyzes the anti-1,4-elimination of the C-3 phosphate and the C-6 proR hydrogen from 5-enolpyruvylshikimate-3-phosphate (EPSP) to yield chorismate, which is the branch point compound that serves as the starting substrate for the three terminal pathways of aromatic amino acid biosynthesis. This reaction introduces a second double bond into the aromatic ring system. The sequence is that of Chorismate synthase from Legionella pneumophila (strain Lens).